Consider the following 424-residue polypeptide: Adenosylmethionine-8-amino-7-oxononanoate aminotransferase (424 aa).

Trp-46 is a substrate binding site. Residue 106-107 (GS) coordinates pyridoxal 5'-phosphate. Residue Tyr-138 participates in substrate binding. Asp-240 serves as a coordination point for pyridoxal 5'-phosphate. Substrate is bound by residues Lys-269 and Gly-303. Lys-269 carries the N6-(pyridoxal phosphate)lysine modification. 304-305 (HS) serves as a coordination point for pyridoxal 5'-phosphate. Position 391 (Arg-391) interacts with substrate.

It belongs to the class-III pyridoxal-phosphate-dependent aminotransferase family. BioA subfamily. Homodimer. Pyridoxal 5'-phosphate serves as cofactor.

The protein localises to the cytoplasm. The catalysed reaction is (8S)-8-amino-7-oxononanoate + S-adenosyl-L-methionine = S-adenosyl-4-methylsulfanyl-2-oxobutanoate + (7R,8S)-7,8-diammoniononanoate. It functions in the pathway cofactor biosynthesis; biotin biosynthesis; 7,8-diaminononanoate from 8-amino-7-oxononanoate (SAM route): step 1/1. In terms of biological role, catalyzes the transfer of the alpha-amino group from S-adenosyl-L-methionine (SAM) to 7-keto-8-aminopelargonic acid (KAPA) to form 7,8-diaminopelargonic acid (DAPA). It is the only aminotransferase known to utilize SAM as an amino donor. Complements a bioU deletion in Synechocystis PCC 6803. The polypeptide is Adenosylmethionine-8-amino-7-oxononanoate aminotransferase (Synechococcus elongatus (strain ATCC 33912 / PCC 7942 / FACHB-805) (Anacystis nidulans R2)).